The primary structure comprises 741 residues: ABC transporter D family member 2 (741 aa).

Transmembrane regions (helical) follow at residues 39–59 (GSLG…FSLV), 119–139 (FLSL…SVSI), and 260–280 (VVVM…VSGF). An ABC transmembrane type-1 domain is found at 131-409 (ARTMLSVSIA…LMVALSQAIG (279 aa)). The 223-residue stretch at 518–740 (IKFENVSIVS…DDDHLKKPLS (223 aa)) folds into the ABC transporter domain. 551 to 558 (GPNGSGKS) contributes to the ATP binding site.

It belongs to the ABC transporter superfamily. ABCD family. Peroxisomal fatty acyl CoA transporter (TC 3.A.1.203) subfamily.

The protein resides in the membrane. This chain is ABC transporter D family member 2 (abcD2), found in Dictyostelium discoideum (Social amoeba).